Here is a 216-residue protein sequence, read N- to C-terminus: Nucleoside triphosphate pyrophosphatase (216 aa).

Asp82 (proton acceptor) is an active-site residue.

Belongs to the Maf family. The cofactor is a divalent metal cation.

The protein resides in the cytoplasm. The catalysed reaction is a ribonucleoside 5'-triphosphate + H2O = a ribonucleoside 5'-phosphate + diphosphate + H(+). It catalyses the reaction a 2'-deoxyribonucleoside 5'-triphosphate + H2O = a 2'-deoxyribonucleoside 5'-phosphate + diphosphate + H(+). Nucleoside triphosphate pyrophosphatase. May have a dual role in cell division arrest and in preventing the incorporation of modified nucleotides into cellular nucleic acids. The chain is Nucleoside triphosphate pyrophosphatase from Mycobacterium ulcerans (strain Agy99).